A 397-amino-acid chain; its full sequence is Na(+)/H(+) antiporter NhaA 3 (397 aa).

A run of 11 helical transmembrane segments spans residues 18–38 (AGGILLIVAAALAMLLANSPF), 63–83 (LLLWTNDGLMAVFFLLVGLEL), 98–118 (IALPAVGAIGGMLVPALIYWW), 129–149 (GWAIPAATDIAFALGVLALLG), 158–178 (IFLTSIAVFDDIGAILIIAFF), 181–201 (SKISMLALVVAAICCAILFIC), 207–224 (TTLRAYLLIGLVMWVALL), 269–289 (VAFLILPIFAFANSGIRFIGM), 306–326 (LFFGKQLGVFLFCGVCVLFGW), 340–360 (GVAVLCGIGFTMSLFIGSLAF), and 373–393 (LGIVFGSLVSAVLGFVVLRSA).

It belongs to the NhaA Na(+)/H(+) (TC 2.A.33) antiporter family.

Its subcellular location is the cell inner membrane. It carries out the reaction Na(+)(in) + 2 H(+)(out) = Na(+)(out) + 2 H(+)(in). Its function is as follows. Na(+)/H(+) antiporter that extrudes sodium in exchange for external protons. The sequence is that of Na(+)/H(+) antiporter NhaA 3 from Saccharophagus degradans (strain 2-40 / ATCC 43961 / DSM 17024).